A 360-amino-acid chain; its full sequence is Putative FBD-associated F-box protein At5g56430 (360 aa).

One can recognise an F-box domain in the interval 1–53 (MRNISDLPNDLLVKILSLIPIKVAASTSLLSKRWGSVWKLIPTLDYDGTYSAA). Kelch repeat units lie at residues 140 to 186 (IRYT…EQLD) and 235 to 285 (VMCS…SVPE). An FBD domain is found at 276-326 (KWEQPNSVPECLLVSLETVKWILYKGTQEEKDVVKYLLKNGNFIKTMSIRF).

The chain is Putative FBD-associated F-box protein At5g56430 from Arabidopsis thaliana (Mouse-ear cress).